Consider the following 530-residue polypeptide: GMP synthase [glutamine-hydrolyzing] (530 aa).

Residues 4–205 (RILILDYGSQ…VREICGCEGD (202 aa)) form the Glutamine amidotransferase type-1 domain. C84 serves as the catalytic Nucleophile. Active-site residues include H179 and E181. The region spanning 206 to 398 (WNMPDYISEA…LGLPPQMVYR (193 aa)) is the GMPS ATP-PPase domain. An ATP-binding site is contributed by 233–239 (SGGVDSS).

Homodimer.

It catalyses the reaction XMP + L-glutamine + ATP + H2O = GMP + L-glutamate + AMP + diphosphate + 2 H(+). It participates in purine metabolism; GMP biosynthesis; GMP from XMP (L-Gln route): step 1/1. In terms of biological role, catalyzes the synthesis of GMP from XMP. The protein is GMP synthase [glutamine-hydrolyzing] of Bordetella avium (strain 197N).